We begin with the raw amino-acid sequence, 359 residues long: Alanine racemase, biosynthetic (359 aa).

Lysine 34 acts as the Proton acceptor; specific for D-alanine in catalysis. At lysine 34 the chain carries N6-(pyridoxal phosphate)lysine. Substrate is bound at residue arginine 129. Catalysis depends on tyrosine 255, which acts as the Proton acceptor; specific for L-alanine. Substrate is bound at residue methionine 303.

This sequence belongs to the alanine racemase family. Pyridoxal 5'-phosphate is required as a cofactor.

The catalysed reaction is L-alanine = D-alanine. Its pathway is amino-acid biosynthesis; D-alanine biosynthesis; D-alanine from L-alanine: step 1/1. It functions in the pathway cell wall biogenesis; peptidoglycan biosynthesis. Its function is as follows. Catalyzes the interconversion of L-alanine and D-alanine. Provides the D-alanine required for cell wall biosynthesis. This Escherichia coli O157:H7 protein is Alanine racemase, biosynthetic (alr).